The primary structure comprises 341 residues: Phenylalanine--tRNA ligase alpha subunit (341 aa).

Residue E256 participates in Mg(2+) binding.

This sequence belongs to the class-II aminoacyl-tRNA synthetase family. Phe-tRNA synthetase alpha subunit type 1 subfamily. Tetramer of two alpha and two beta subunits. Mg(2+) is required as a cofactor.

The protein resides in the cytoplasm. The enzyme catalyses tRNA(Phe) + L-phenylalanine + ATP = L-phenylalanyl-tRNA(Phe) + AMP + diphosphate + H(+). The protein is Phenylalanine--tRNA ligase alpha subunit of Chlamydia abortus (strain DSM 27085 / S26/3) (Chlamydophila abortus).